We begin with the raw amino-acid sequence, 652 residues long: Acetyl-coenzyme A synthetase (652 aa).

Residues 191-194 (RAGR), Thr-311, and Asn-335 contribute to the CoA site. ATP is bound by residues 387–389 (GEP), 411–416 (DTWWQT), Asp-500, and Arg-515. Ser-523 lines the CoA pocket. An ATP-binding site is contributed by Arg-526. Mg(2+)-binding residues include Val-537, His-539, and Ile-542. CoA is bound at residue Arg-584. Lys-609 is subject to N6-acetyllysine.

Belongs to the ATP-dependent AMP-binding enzyme family. Mg(2+) is required as a cofactor. Post-translationally, acetylated. Deacetylation by the SIR2-homolog deacetylase activates the enzyme.

The enzyme catalyses acetate + ATP + CoA = acetyl-CoA + AMP + diphosphate. In terms of biological role, catalyzes the conversion of acetate into acetyl-CoA (AcCoA), an essential intermediate at the junction of anabolic and catabolic pathways. Acs undergoes a two-step reaction. In the first half reaction, Acs combines acetate with ATP to form acetyl-adenylate (AcAMP) intermediate. In the second half reaction, it can then transfer the acetyl group from AcAMP to the sulfhydryl group of CoA, forming the product AcCoA. Functionally, enables the cell to use acetate during aerobic growth to generate energy via the TCA cycle, and biosynthetic compounds via the glyoxylate shunt. Acetylates CheY, the response regulator involved in flagellar movement and chemotaxis. This is Acetyl-coenzyme A synthetase from Yersinia pseudotuberculosis serotype I (strain IP32953).